The chain runs to 612 residues: Dihydroxy-acid dehydratase (612 aa).

Asp-81 is a binding site for Mg(2+). Residue Cys-122 participates in [2Fe-2S] cluster binding. 2 residues coordinate Mg(2+): Asp-123 and Lys-124. Position 124 is an N6-carboxylysine (Lys-124). Cys-193 contacts [2Fe-2S] cluster. Glu-489 provides a ligand contact to Mg(2+). The Proton acceptor role is filled by Ser-515.

The protein belongs to the IlvD/Edd family. In terms of assembly, homodimer. Requires [2Fe-2S] cluster as cofactor. Mg(2+) serves as cofactor.

It carries out the reaction (2R)-2,3-dihydroxy-3-methylbutanoate = 3-methyl-2-oxobutanoate + H2O. The enzyme catalyses (2R,3R)-2,3-dihydroxy-3-methylpentanoate = (S)-3-methyl-2-oxopentanoate + H2O. It participates in amino-acid biosynthesis; L-isoleucine biosynthesis; L-isoleucine from 2-oxobutanoate: step 3/4. It functions in the pathway amino-acid biosynthesis; L-valine biosynthesis; L-valine from pyruvate: step 3/4. In terms of biological role, functions in the biosynthesis of branched-chain amino acids. Catalyzes the dehydration of (2R,3R)-2,3-dihydroxy-3-methylpentanoate (2,3-dihydroxy-3-methylvalerate) into 2-oxo-3-methylpentanoate (2-oxo-3-methylvalerate) and of (2R)-2,3-dihydroxy-3-methylbutanoate (2,3-dihydroxyisovalerate) into 2-oxo-3-methylbutanoate (2-oxoisovalerate), the penultimate precursor to L-isoleucine and L-valine, respectively. In Xanthomonas oryzae pv. oryzae (strain MAFF 311018), this protein is Dihydroxy-acid dehydratase.